Consider the following 460-residue polypeptide: Chromosomal replication initiator protein DnaA (460 aa).

The segment at 1-84 (MAVSLWQQCI…RFDIGSRPSA (84 aa)) is domain I, interacts with DnaA modulators. The interval 84 to 123 (AKKPEPAPVAAVRVPNPQTKASVGTSFNTTEPVANANHRS) is domain II. The tract at residues 124-340 (NINPTYQFDN…GALNRVIANA (217 aa)) is domain III, AAA+ region. 4 residues coordinate ATP: glycine 168, glycine 170, lysine 171, and threonine 172. Residues 341–460 (NFTGRPITID…YANLIRTLSS (120 aa)) form a domain IV, binds dsDNA region.

This sequence belongs to the DnaA family. As to quaternary structure, oligomerizes as a right-handed, spiral filament on DNA at oriC.

The protein localises to the cytoplasm. Its function is as follows. Plays an essential role in the initiation and regulation of chromosomal replication. ATP-DnaA binds to the origin of replication (oriC) to initiate formation of the DNA replication initiation complex once per cell cycle. Binds the DnaA box (a 9 base pair repeat at the origin) and separates the double-stranded (ds)DNA. Forms a right-handed helical filament on oriC DNA; dsDNA binds to the exterior of the filament while single-stranded (ss)DNA is stabiized in the filament's interior. The ATP-DnaA-oriC complex binds and stabilizes one strand of the AT-rich DNA unwinding element (DUE), permitting loading of DNA polymerase. After initiation quickly degrades to an ADP-DnaA complex that is not apt for DNA replication. Binds acidic phospholipids. In Shewanella sp. (strain ANA-3), this protein is Chromosomal replication initiator protein DnaA.